The primary structure comprises 243 residues: Carboxy-S-adenosyl-L-methionine synthase (243 aa).

Residues Tyr-40, 65-67 (GCS), 90-91 (DN), 118-119 (DI), Asn-133, and Arg-200 contribute to the S-adenosyl-L-methionine site.

It belongs to the class I-like SAM-binding methyltransferase superfamily. Cx-SAM synthase family. As to quaternary structure, homodimer.

The enzyme catalyses prephenate + S-adenosyl-L-methionine = carboxy-S-adenosyl-L-methionine + 3-phenylpyruvate + H2O. Catalyzes the conversion of S-adenosyl-L-methionine (SAM) to carboxy-S-adenosyl-L-methionine (Cx-SAM). The sequence is that of Carboxy-S-adenosyl-L-methionine synthase from Shewanella oneidensis (strain ATCC 700550 / JCM 31522 / CIP 106686 / LMG 19005 / NCIMB 14063 / MR-1).